The following is a 355-amino-acid chain: Phosphoribosylformylglycinamidine cyclo-ligase (355 aa).

This sequence belongs to the AIR synthase family.

It localises to the cytoplasm. The catalysed reaction is 2-formamido-N(1)-(5-O-phospho-beta-D-ribosyl)acetamidine + ATP = 5-amino-1-(5-phospho-beta-D-ribosyl)imidazole + ADP + phosphate + H(+). It participates in purine metabolism; IMP biosynthesis via de novo pathway; 5-amino-1-(5-phospho-D-ribosyl)imidazole from N(2)-formyl-N(1)-(5-phospho-D-ribosyl)glycinamide: step 2/2. The polypeptide is Phosphoribosylformylglycinamidine cyclo-ligase (Paraburkholderia phytofirmans (strain DSM 17436 / LMG 22146 / PsJN) (Burkholderia phytofirmans)).